Reading from the N-terminus, the 94-residue chain is DNA-directed RNA polymerase subunit omega (94 aa).

Belongs to the RNA polymerase subunit omega family. As to quaternary structure, the RNAP catalytic core consists of 2 alpha, 1 beta, 1 beta' and 1 omega subunit. When a sigma factor is associated with the core the holoenzyme is formed, which can initiate transcription.

It carries out the reaction RNA(n) + a ribonucleoside 5'-triphosphate = RNA(n+1) + diphosphate. Promotes RNA polymerase assembly. Latches the N- and C-terminal regions of the beta' subunit thereby facilitating its interaction with the beta and alpha subunits. In Limosilactobacillus fermentum (strain NBRC 3956 / LMG 18251) (Lactobacillus fermentum), this protein is DNA-directed RNA polymerase subunit omega.